We begin with the raw amino-acid sequence, 437 residues long: Protein arginine methyltransferase NDUFAF7 homolog, mitochondrial (437 aa).

The disordered stretch occupies residues 21–49; the sequence is RPNLGATGTPKMEPPKEQPEASSKAESGH.

It belongs to the NDUFAF7 family.

It is found in the mitochondrion. The enzyme catalyses L-arginyl-[protein] + 2 S-adenosyl-L-methionine = N(omega),N(omega)'-dimethyl-L-arginyl-[protein] + 2 S-adenosyl-L-homocysteine + 2 H(+). Functionally, arginine methyltransferase involved in the assembly or stability of mitochondrial NADH:ubiquinone oxidoreductase complex (complex I). The chain is Protein arginine methyltransferase NDUFAF7 homolog, mitochondrial from Drosophila melanogaster (Fruit fly).